The chain runs to 375 residues: Growth/differentiation factor 8 (375 aa).

An N-terminal signal peptide occupies residues Met-1–Ala-18. Residues Gly-19–Arg-266 constitute a propeptide that is removed on maturation. N-linked (GlcNAc...) asparagine glycosylation is found at Asn-48 and Asn-71. Cystine bridges form between Cys-272–Cys-282, Cys-281–Cys-340, Cys-309–Cys-372, and Cys-313–Cys-374.

It belongs to the TGF-beta family. As to quaternary structure, homodimer; disulfide-linked. Interacts with WFIKKN2, leading to inhibit its activity. Interacts with FSTL3. Synthesized as large precursor molecule that undergoes proteolytic cleavage to generate an N-terminal propeptide and a disulfide linked C-terminal dimer, which is the biologically active molecule. The circulating form consists of a latent complex of the C-terminal dimer and other proteins, including its propeptide, which maintain the C-terminal dimer in a latent, inactive state. Ligand activation requires additional cleavage of the prodomain by a tolloid-like metalloproteinase.

The protein localises to the secreted. In terms of biological role, acts specifically as a negative regulator of skeletal muscle growth. This is Growth/differentiation factor 8 (MSTN) from Aepyceros melampus (Impala).